Reading from the N-terminus, the 433-residue chain is O-methyltransferase hasC (433 aa).

Residues glutamate 265 and 293-295 (GDF) contribute to the S-adenosyl-L-methionine site. The Proton acceptor role is filled by histidine 313. A disordered region spans residues 413–433 (SPRANGNGNSAGGLEWESELM).

It belongs to the class I-like SAM-binding methyltransferase superfamily. Cation-independent O-methyltransferase family. COMT subfamily.

The protein operates within secondary metabolite biosynthesis. Its function is as follows. O-methyltransferase; part of the gene cluster that mediates the biosynthesis of hexadehydro-astechrome (HAS), a tryptophan-derived iron(III)-complex that acts as a virulence factor in infected mice. Within the pathway, hasC, with the cytochrome P450 monooxygenase hasH and the FAD-linked oxidoreductase hasG, convert the hasE-prenylated Trp-Ala-dipeptide into an O-methylated diketopiperazine that is then released from the hasD NRPS. The HAS biosynthesis begins with the synthesis of a tethered Trp-Ala dipeptide by the NRPS hasD. The 7-dimethylallyltryptophan synthase hasE then catalyzes the prenylation of the hasD-tethered tryptophan or the resulting tethered Trp-Ala dipeptide at the C-7 position of the indole moiety. HAS biosynthesis continues via tethered intermediates with the succesive actions of the cytochrome P450 monooxygenase hasH, the O-methyltransferase hasC, and the FAD-linked oxidoreductase hasG. The resulting O-methylated diketopiperazine is then released from hasD. Finally, three O-methylated diketopiperazine molecules assemble in a trimeric complex with Fe(III) to produce hexadehydro-astechrome. The protein is O-methyltransferase hasC of Aspergillus fumigatus (strain CBS 144.89 / FGSC A1163 / CEA10) (Neosartorya fumigata).